The chain runs to 612 residues: Glutamine--fructose-6-phosphate aminotransferase [isomerizing] (612 aa).

Cysteine 2 functions as the Nucleophile; for GATase activity in the catalytic mechanism. A Glutamine amidotransferase type-2 domain is found at 2 to 221 (CGIVGIVSQR…NGDIAEITNS (220 aa)). SIS domains are found at residues 289–429 (FNKT…IRKI) and 461–602 (LVKN…VDHP). Lysine 607 functions as the For Fru-6P isomerization activity in the catalytic mechanism.

Homodimer.

It localises to the cytoplasm. The enzyme catalyses D-fructose 6-phosphate + L-glutamine = D-glucosamine 6-phosphate + L-glutamate. In terms of biological role, catalyzes the first step in hexosamine metabolism, converting fructose-6P into glucosamine-6P using glutamine as a nitrogen source. In Wigglesworthia glossinidia brevipalpis, this protein is Glutamine--fructose-6-phosphate aminotransferase [isomerizing].